We begin with the raw amino-acid sequence, 120 residues long: NAD(P)H-quinone oxidoreductase subunit 3, chloroplastic (120 aa).

3 helical membrane-spanning segments follow: residues 9 to 29 (IFWA…LLSG), 64 to 84 (MFAL…PWAM), and 88 to 108 (VLGV…IVGL).

This sequence belongs to the complex I subunit 3 family. NDH is composed of at least 16 different subunits, 5 of which are encoded in the nucleus.

It is found in the plastid. It localises to the chloroplast thylakoid membrane. It carries out the reaction a plastoquinone + NADH + (n+1) H(+)(in) = a plastoquinol + NAD(+) + n H(+)(out). It catalyses the reaction a plastoquinone + NADPH + (n+1) H(+)(in) = a plastoquinol + NADP(+) + n H(+)(out). NDH shuttles electrons from NAD(P)H:plastoquinone, via FMN and iron-sulfur (Fe-S) centers, to quinones in the photosynthetic chain and possibly in a chloroplast respiratory chain. The immediate electron acceptor for the enzyme in this species is believed to be plastoquinone. Couples the redox reaction to proton translocation, and thus conserves the redox energy in a proton gradient. The polypeptide is NAD(P)H-quinone oxidoreductase subunit 3, chloroplastic (Fagopyrum esculentum subsp. ancestrale (Wild buckwheat)).